A 468-amino-acid polypeptide reads, in one-letter code: Probable Xaa-Pro aminopeptidase PEPP (468 aa).

Aspartate 264, aspartate 275, glutamate 398, and glutamate 438 together coordinate Mn(2+).

It belongs to the peptidase M24B family. It depends on Mn(2+) as a cofactor.

It catalyses the reaction Release of any N-terminal amino acid, including proline, that is linked to proline, even from a dipeptide or tripeptide.. Functionally, catalyzes the removal of a penultimate prolyl residue from the N-termini of peptides. The polypeptide is Probable Xaa-Pro aminopeptidase PEPP (PEPP) (Paracoccidioides brasiliensis (strain Pb18)).